The primary structure comprises 199 residues: Probable chemoreceptor glutamine deamidase CheD (199 aa).

This sequence belongs to the CheD family.

It carries out the reaction L-glutaminyl-[protein] + H2O = L-glutamyl-[protein] + NH4(+). Its function is as follows. Probably deamidates glutamine residues to glutamate on methyl-accepting chemotaxis receptors (MCPs), playing an important role in chemotaxis. In Nitratidesulfovibrio vulgaris (strain ATCC 29579 / DSM 644 / CCUG 34227 / NCIMB 8303 / VKM B-1760 / Hildenborough) (Desulfovibrio vulgaris), this protein is Probable chemoreceptor glutamine deamidase CheD.